The sequence spans 498 residues: ATP synthase subunit alpha 1 (498 aa).

This sequence belongs to the ATPase alpha/beta chains family. As to quaternary structure, F-type ATPases have 2 components, CF(1) - the catalytic core - and CF(0) - the membrane proton channel. CF(1) has five subunits: alpha(3), beta(3), gamma(1), delta(1), epsilon(1). CF(0) has three main subunits: a(1), b(2) and c(9-12). The alpha and beta chains form an alternating ring which encloses part of the gamma chain. CF(1) is attached to CF(0) by a central stalk formed by the gamma and epsilon chains, while a peripheral stalk is formed by the delta and b chains.

The protein localises to the cell membrane. It carries out the reaction ATP + H2O + 4 H(+)(in) = ADP + phosphate + 5 H(+)(out). Its function is as follows. Produces ATP from ADP in the presence of a proton gradient across the membrane. The alpha chain is a regulatory subunit. The chain is ATP synthase subunit alpha 1 from Listeria monocytogenes serotype 4b (strain F2365).